Consider the following 409-residue polypeptide: MASGKATGKTDAPAPVIKLGGPRPPKVGSSGNASWFQAIKAKKLNSPQPKFEGSGVPDNENFKTSQQHGYWRRQARFKPGKGRRKPVPDAWYFYYTGTGPAADLNWGDSQDGIVWVAAKGADVKSRSNQGTRDPDKFDQYPLRFSDGGPDGNFRWDFIPLNRGRSGRSTAASSAASSRPPSREGSRGRRSGSEDDLIARAAKIIQDQQKKGSRITKAKADEMAHRRYCKRTIPPGYKVDQVFGPRTKGKEGNFGDDKMNEEGIKDGRVTAMLNLVPSSHACLFGSRVTPKLQPDGLHLKFEFTTVVPRDDPQFDNYVKICDQCVDGVGTRPKDDEPKPKSRSSSRPATRTSSPAPRQQRLKKEKRPKKQDDEVDKALTSDEERNNAQLEFDDEPKVINWGDSALGENEL.

Disordered stretches follow at residues 1-32 (MASGKATGKTDAPAPVIKLGGPRPPKVGSSGN), 46-84 (SPQPKFEGSGVPDNENFKTSQQHGYWRRQARFKPGKGRR), 121-194 (ADVK…GSED), and 238-259 (VDQVFGPRTKGKEGNFGDDKMN). The interval 29 to 160 (SSGNASWFQA…GNFRWDFIPL (132 aa)) is RNA-binding. In terms of domain architecture, CoV N NTD spans 31 to 156 (GNASWFQAIK…GGPDGNFRWD (126 aa)). Over residues 70-84 (YWRRQARFKPGKGRR) the composition is skewed to basic residues. Over residues 162 to 179 (RGRSGRSTAASSAASSRP) the composition is skewed to low complexity. 2 stretches are compositionally biased toward basic and acidic residues: residues 180–192 (PSREGSRGRRSGS) and 247–259 (KGKEGNFGDDKMN). 2 positions are modified to phosphoserine; by host: Ser190 and Ser192. Residues 215 to 331 (TKAKADEMAH…QCVDGVGTRP (117 aa)) enclose the CoV N CTD domain. A dimerization region spans residues 226–333 (RYCKRTIPPG…VDGVGTRPKD (108 aa)). A disulfide bridge connects residues Cys320 and Cys323. A disordered region spans residues 326 to 409 (GVGTRPKDDE…GDSALGENEL (84 aa)). Low complexity predominate over residues 341–356 (RSSSRPATRTSSPAPR). Positions 358 to 367 (QRLKKEKRPK) are enriched in basic residues. Residues 368-384 (KQDDEVDKALTSDEERN) show a composition bias toward basic and acidic residues. Thr378 bears the Phosphothreonine; by host mark. A Phosphoserine; by host modification is found at Ser379.

It belongs to the gammacoronavirus nucleocapsid protein family. In terms of assembly, homooligomer. Both monomeric and oligomeric forms interact with RNA. Interacts with protein M. Interacts with NSP3; this interaction serves to tether the genome to the newly translated replicase-transcriptase complex at a very early stage of infection. In terms of processing, ADP-ribosylated. The ADP-ribosylation is retained in the virion during infection. Phosphorylated on serine and threonine residues.

It is found in the virion. Its subcellular location is the host endoplasmic reticulum-Golgi intermediate compartment. The protein resides in the host Golgi apparatus. Functionally, packages the positive strand viral genome RNA into a helical ribonucleocapsid (RNP) and plays a fundamental role during virion assembly through its interactions with the viral genome and membrane protein M. Plays an important role in enhancing the efficiency of subgenomic viral RNA transcription as well as viral replication. In Avian infectious bronchitis virus (strain Gray) (IBV), this protein is Nucleoprotein.